We begin with the raw amino-acid sequence, 308 residues long: uncharacterized protein (308 aa).

7 helical membrane-spanning segments follow: residues 10–30, 91–111, 115–135, 178–198, 219–239, 251–271, and 288–308; these read IILL…TNLI, LPTI…VVIL, LGLI…LIGI, VIPM…LGLM, ITVL…VDIL, LIVL…KHSI, and INYT…IAFF.

It to M.jannaschii MJ0871, MJ1556 and MJ1589.

The protein localises to the cell membrane. This is an uncharacterized protein from Methanocaldococcus jannaschii (strain ATCC 43067 / DSM 2661 / JAL-1 / JCM 10045 / NBRC 100440) (Methanococcus jannaschii).